Here is a 741-residue protein sequence, read N- to C-terminus: Endoplasmic reticulum membrane sensor NFE2L1 (741 aa).

The chain crosses the membrane as a helical; Signal-anchor for type II membrane protein span at residues 7 to 24 (YLTEGLLQFTILLSLIGV). 2 disordered regions span residues 108 to 148 (DPEG…TEQG) and 198 to 220 (QKEQ…WSGE). Polar residues predominate over residues 113-131 (VSGSQPNSGLALESSSGLQ). The segment at 191 to 199 (VFDYSHRQK) is cholesterol recognition/amino acid consensus (CRAC) region. Over residues 198 to 216 (QKEQDVDKELQDGREREDT) the composition is skewed to basic and acidic residues. N-linked (GlcNAc...) asparagine glycans are attached at residues Asn-319 and Asn-331. The tract at residues 350-354 (SPEVE) is CPD. Residue Asn-394 is glycosylated (N-linked (GlcNAc...) asparagine). Disordered stretches follow at residues 441-501 (EEEF…DSET) and 551-582 (SALD…QMSR). The Destruction motif motif lies at 447 to 451 (DSGLS). Residues 447 to 492 (DSGLSLDSSHSPSSLSSSEGSSSSSSSSSSSSASSSASSSFSEEGA) show a composition bias toward low complexity. Ser-497 bears the Phosphoserine; by CK2 mark. Positions 567 to 582 (GSKEKQADFLDKQMSR) are enriched in basic and acidic residues. Ser-568 carries the post-translational modification Phosphoserine. The bZIP domain maps to 623-686 (LIRDIRRRGK…RQMKQKVQSL (64 aa)). Residues 625 to 644 (RDIRRRGKNKMAAQNCRKRK) are basic motif. A leucine-zipper region spans residues 651-665 (LERDVEDLQRDKARL). A disordered region spans residues 722–741 (RTMADQQARRQERKPKDRRK). The Nuclear localization signal signature appears at 730-737 (RRQERKPK). Positions 732–741 (QERKPKDRRK) are enriched in basic residues.

This sequence belongs to the bZIP family. CNC subfamily. As to quaternary structure, interacts with KEAP1. In terms of assembly, interacts (via CPD region) with FBXW7; leading to its ubiquitination and degradation. Interacts with SYVN1/HRD1; leading to its ubiquitination and degradation. Interacts (when ubiquitinated) with DDI2; leading to its cleavage. Interacts (via the bZIP domain) with small MAF protein (MAFF, MAFG or MAFK); required for binding to antioxidant response elements (AREs) on DNA. Interacts (via Destruction motif) with BTRC; leading to its ubiquitination and degradation. Interacts with CEBPB; the heterodimer represses expression of DSPP during odontoblast differentiation. Interacts with MOTS-c, a peptide produced by the mitochondrially encoded 12S rRNA MT-RNR1. Post-translationally, cleaved at Leu-104 by the aspartyl protease DDI2 following retrotranslocation, releasing the protein from the endoplasmic reticulum membrane and forming the transcription factor NRF1 that translocates into the nucleus. Ubiquitination is prerequisite for cleavage by aspartyl protease DDI2. N-glycosylated in normal conditions, when it has a single-pass type II membrane protein topology, with the DNA-binding domain facing the endoplasmic reticulum lumen. Deglycosylated during retrotranslocation to the cytosolic side of the membrane, to have a single-pass type III membrane protein topology with the major part of the protein facing the cytosol. In terms of processing, ubiquitinated by the SCF(FBXW7) complex and SYVN1/HRD1, leading to its degradation by the proteasome. Ubiquitinated during retrotranslocation to the cytosolic side of the membrane: ubiquitination does not lead to degradation and is required for processing by the aspartyl protease DDI2 and subsequent release from the endoplasmic reticulum membrane. Post-translationally, phosphorylation by CK2 at Ser-497 inhibits transcription factor activity, possibly by affecting DNA-binding activity. Phosphorylation at Ser-568 is required for interaction with CEBPB. Ubiquitinated by the SCF(BTRC) complex in the nucleus, leading to its degradation by the proteasome. In terms of tissue distribution, isoform 1: Widely expressed including kidney, brown fat, white fat, large intestine, small intestine, stomach, lung, brain and liver. Isoform 1: Expressed in mouse embryonic fibroblasts (MEF). Isoform 2: Widely expressed including kidney, brown fat, white fat, large intestine, small intestine, stomach, lung, brain and liver. Isoform 2: levels in white fat, lung and liver are increased compared to isoform 1 (at protein level). Isoform 2: levels are elevated in brown fat and brain, but are reduced in liver compared to isoform 1 levels. Isoform 2: Expressed in mouse embryonic fibroblasts (MEF).

The protein resides in the endoplasmic reticulum membrane. Its subcellular location is the nucleus. It is found in the cytoplasm. Functionally, endoplasmic reticulum membrane sensor that translocates into the nucleus in response to various stresses to act as a transcription factor. Constitutes a precursor of the transcription factor NRF1. Able to detect various cellular stresses, such as cholesterol excess, oxidative stress or proteasome inhibition. In response to stress, it is released from the endoplasmic reticulum membrane following cleavage by the protease DDI2 and translocates into the nucleus to form the transcription factor NRF1. Acts as a key sensor of cholesterol excess: in excess cholesterol conditions, the endoplasmic reticulum membrane form of the protein directly binds cholesterol via its CRAC motif, preventing cleavage and release of the transcription factor NRF1, thereby allowing expression of genes promoting cholesterol removal, such as CD36. Involved in proteasome homeostasis: in response to proteasome inhibition, it is released from the endoplasmic reticulum membrane, translocates to the nucleus and activates expression of genes encoding proteasome subunits. Its function is as follows. CNC-type bZIP family transcription factor that translocates to the nucleus and regulates expression of target genes in response to various stresses. Heterodimerizes with small-Maf proteins (MAFF, MAFG or MAFK) and binds DNA motifs including the antioxidant response elements (AREs), which regulate expression of genes involved in oxidative stress response. Activates or represses expression of target genes, depending on the context. Plays a key role in cholesterol homeostasis by acting as a sensor of cholesterol excess: in low cholesterol conditions, translocates into the nucleus and represses expression of genes involved in defense against cholesterol excess, such as CD36. In excess cholesterol conditions, the endoplasmic reticulum membrane form of the protein directly binds cholesterol via its CRAC motif, preventing cleavage and release of the transcription factor NRF1, thereby allowing expression of genes promoting cholesterol removal. Critical for redox balance in response to oxidative stress: acts by binding the AREs motifs on promoters and mediating activation of oxidative stress response genes, such as GCLC, GCLM, GSS, MT1 and MT2. Plays an essential role during fetal liver hematopoiesis: probably has a protective function against oxidative stress and is involved in lipid homeostasis in the liver. Involved in proteasome homeostasis: in response to proteasome inhibition, mediates the 'bounce-back' of proteasome subunits by translocating into the nucleus and activating expression of genes encoding proteasome subunits. Also involved in regulating glucose flux. Together with CEBPB; represses expression of DSPP during odontoblast differentiation. In response to ascorbic acid induction, activates expression of SP7/Osterix in osteoblasts. Transcription factor that binds the antioxidant response elements (ARE) consensus sequence on promoters and activates their expression. In terms of biological role, transcription factor that binds the extended kappa 3 site of the TNF-alpha promoter after Fc gamma RIII stimulation and participates in the induction of this cytokine. This chain is Endoplasmic reticulum membrane sensor NFE2L1, found in Mus musculus (Mouse).